A 114-amino-acid polypeptide reads, in one-letter code: Type 4 adapter protein IcmS (114 aa).

In terms of assembly, the T4BSS is a complex nanomachine composed of several subcomplexes. This subunit is part of the Type IV Coupling Complex (T4CC), a subcomplex composed of the DotLMNYZ core and the IcmSW-LvgA adapter subunits, linked by the C-terminal tail of DotL. Interacts with IcmW. IcmS and IcmW form a stable complex. Interacts directly with the type 4 coupling protein DotL. Interacts with LvgA. Interacts with effector proteins.

Its subcellular location is the cytoplasm. Its activity is regulated as follows. Interaction with DotL is critical for the export of IcmSW-dependent substrates. Its function is as follows. Component of the Dot/Icm type IVB secretion system (T4BSS), which is used to inject bacterial effector proteins into eukaryotic host cells. Part of a subcomplex which recruits effector proteins and delivers them to the core transmembrane subcomplex. The IcmS/IcmW protein complex plays an important role in protein translocation by interacting with multiple Dot/Icm effector proteins to facilitate their translocation into host cells. Interaction promotes conformational changes in the effector protein, which may facilitate display of a C-terminal translocation signal. May maintain the substrates in a translocation competent form. Required for intracellular growth in host cells, replicative phagosome formation and phagosome trafficking. IcmS is required for IcmW stability. The chain is Type 4 adapter protein IcmS from Legionella pneumophila subsp. pneumophila (strain Philadelphia 1 / ATCC 33152 / DSM 7513).